Consider the following 2081-residue polypeptide: MEIYGFSPLSFQDTESWKNSAFAACRGCKTYPIEEVGTDGSVRIRELPVGLVLKGVMAQYRSILWTQFVADPATTTVDRKSFDFWLFCRRAEAAQERAFRARQSKRAAKAAALDAEGLIDRSYKGRTYKVSTRGLSWKSVRAAQKAARNAAKNFGFAISANPFSALSALPSEGKGLSAGETPATVAEVAPQCFWAALRSLKREFSETPVEDLPFLGLVLPALPQRNGELARTLRAQLRAHQAARVVASGVSLREIPRRTTTTVKVVVPRVTIPVVTFNGAVLHHPKHPVIVALLKRVTIRAKPICERRTYVRLVDGPGLFPSPRTPTLDLGFMEKVSELATMPGDSIEKCIAIKCILSNDYNFKEDADMGDVLLSLQSKYTGGGDTAEHRGFISGALYGAGVCVVTSAWKFLDATLHASQIGTQISQILDYIQSGLAWLSSSYASIANFFTKGKVYIMECLELVKAKLPSYLFSAEVGRYILLLLGVFLCLGLVNSLIYSVAPQYSLSFGTVCKISLGALALVGLGDLVAYLFNSPGAKLRAFVNIVCNMCGCKNFFAPSSDGEERSGFSVLSMMGAICALQSLLPANVSRFSWDCGKWAQTFKTGFDCHEKFATVCESLSVWLLSKVGLFKSSESQAMQTILLSSGINTCGWLEKVAAFHSDVHSSQICIPDLLLRARQLIETGDTISDLLSNSTVSLSFLLRERIKLALRELKEDHTQLQLAVDVSVSSECPFVLFFAGDSGVGKSTAMKKFREEVLDKLGYPKTARFYPRNPGEKFWSGYLRHTAVIYDDFAQIPQGDMTYDEAELIRIVTNAVVTVPMAIAEEKGRTFRSKFVFACTNRYCESEDAPLADEMAFRRRRHLYIHVARKPGVEPGPRGVDNLEFSEMDNRDSNGEPAYQLNDQGKRVLINQKLTYDQLLQLYFERYQAFKVLEGQLEGSVARAPSSSNYEGCDNWWTLVGSEAKFEAVYFNGEPVSEDDQLTQLGNYKTRYDILRARVILESIDYADCDFIIKNFSAMGEGIYHADPEVNATGQRHFSAMSPVTRRLICSCLKTRREDEIKSHSLLSKFKSLLTVPVDAWKAAPAWFKCISLLLVAGGVGYALCRAISGIIGIFRKGPAAASLALFSGGIGAVLRGDSPDDPREERDNPDVIVTKGRGKAIWAGAEIPEALEALRKSQVVLMGTGRKGEPVMCSALPITSHSVLCTTHEIEAFDPNQNMSLIVNNSIYSFVLIPGAIMYKRYDQPNLVDKVHELVRVDLPKNKGFSLNARAQFSEDFYDNGTAMKCWVVPNKNPAVADIMRKVDCEKSSQIIDIFASELSRSSGCEPVRQTQRFIYADGPALNGHCGRLLCANLAGHWRVIGMCAGEGKNRAGVTKALYADIPHEFLRADNLNAVQRGAELDAAILDRFSIPISECRKELTPMTTRLGYVVGQYPRALRKTSIVPSIIHDNLWRKPETEPTILGKIDDRSPFPYDPYATIGEKFVQEVGPIDLSVGSDASLVVANIGSSWKAVGKPQCPTVLTWEVAINGDAAIPYCERLPLSTSEGYPDSIQRNFGEKGKKRFFDLKGENVRVPTPALMEELEVLERELQKEEVCLTCINTACAKDEKTAPKKVRVQPKTRIFEILPFQINIIIRRYLMFWMQLLMVAHDELPSKVGINVYSESWDRLLGRHTRLANHFTGDYSGFDTSTPRVLVYAIIDKINELADDGEVNQRTRRNIIRFVLNRYLISDGVLYEIHGGTPSGFAPTVMINSVVNEFYLKWSWIGLLKEAGYANQATLYAFHEATEISLYGDDNFVSVATPVASVYNLTTISNFLGRIGVKLGDGAKTGTIKPFIPLEEVDFLKRQFVADSGSTAILCPLKKISIEERLFYVRGGQDEIAALELNIATALCEAFFHGKEYFSFLEGKIIEAMRKSGVALSRPLPTMESVRAWYMSQRGNTKIRSPSFEGLGTMSGILNIGLAEARSVGGVACFSGIEFRGRSDDHLMVIPTYIPGGWRTKQQQTYISFVRDSEKMAQVIKRVAHFSTVVATDKSMAYLVAICIAYSRGSISRMEVRCHVQNLKVAEMLLCNQICNFL.

2 helical membrane-spanning segments follow: residues 481 to 501 and 515 to 535; these read ILLLLGVFLCLGLVNSLIYSV and ISLGALALVGLGDLVAYLFNS. The SF3 helicase domain occupies 714 to 881; it reads LKEDHTQLQL…PGVEPGPRGV (168 aa). ATP is bound at residue 741–748; that stretch reads GDSGVGKS. The segment at 877–900 is disordered; the sequence is GPRGVDNLEFSEMDNRDSNGEPAY. A Peptidase C3 domain is found at 1166–1388; it reads GAEIPEALEA…ALYADIPHEF (223 aa). Residues histidine 1210, glutamate 1255, and cysteine 1348 each act as for picornain 3C-like protease activity in the active site. A RdRp catalytic domain is found at 1679-1810; sequence ANHFTGDYSG…SVATPVASVY (132 aa).

The protein localises to the host membrane. The catalysed reaction is RNA(n) + a ribonucleoside 5'-triphosphate = RNA(n+1) + diphosphate. Functionally, picornain 3C-like protease is a thiol protease that probably cleaves the polyprotein. This Citrus unshiu (Satsuma mandarin) protein is RNA1 polyprotein.